We begin with the raw amino-acid sequence, 868 residues long: MRFTTTIWRPPSLENFKPKFRIYANGVAQVRIYCFGTVSSSRLYNAHNLFDKSPGRDRESYISLLFGFSRDGRTQEAKRLFLNIHRLGMEMDCSIFSSVLKVSATLCDELFGRQLHCQCIKFGFLDDVSVGTSLVDTYMKGSNFKDGRKVFDEMKERNVVTWTTLISGYARNSMNDEVLTLFMRMQNEGTQPNSFTFAAALGVLAEEGVGGRGLQVHTVVVKNGLDKTIPVSNSLINLYLKCGNVRKARILFDKTEVKSVVTWNSMISGYAANGLDLEALGMFYSMRLNYVRLSESSFASVIKLCANLKELRFTEQLHCSVVKYGFLFDQNIRTALMVAYSKCTAMLDALRLFKEIGCVGNVVSWTAMISGFLQNDGKEEAVDLFSEMKRKGVRPNEFTYSVILTALPVISPSEVHAQVVKTNYERSSTVGTALLDAYVKLGKVEEAAKVFSGIDDKDIVAWSAMLAGYAQTGETEAAIKMFGELTKGGIKPNEFTFSSILNVCAATNASMGQGKQFHGFAIKSRLDSSLCVSSALLTMYAKKGNIESAEEVFKRQREKDLVSWNSMISGYAQHGQAMKALDVFKEMKKRKVKMDGVTFIGVFAACTHAGLVEEGEKYFDIMVRDCKIAPTKEHNSCMVDLYSRAGQLEKAMKVIENMPNPAGSTIWRTILAACRVHKKTELGRLAAEKIIAMKPEDSAAYVLLSNMYAESGDWQERAKVRKLMNERNVKKEPGYSWIEVKNKTYSFLAGDRSHPLKDQIYMKLEDLSTRLKDLGYEPDTSYVLQDIDDEHKEAVLAQHSERLAIAFGLIATPKGSPLLIIKNLRVCGDCHLVIKLIAKIEEREIVVRDSNRFHHFSSDGVCSCGDFW.

PPR repeat units follow at residues 57–91 (DRESYISLLFGFSRDGRTQEAKRLFLNIHRLGMEM), 92–126 (DCSIFSSVLKVSATLCDELFGRQLHCQCIKFGFLD), 127–157 (DVSVGTSLVDTYMKGSNFKDGRKVFDEMKER), 158–192 (NVVTWTTLISGYARNSMNDEVLTLFMRMQNEGTQP), 193–227 (NSFTFAAALGVLAEEGVGGRGLQVHTVVVKNGLDK), 228–258 (TIPVSNSLINLYLKCGNVRKARILFDKTEVK), 259–293 (SVVTWNSMISGYAANGLDLEALGMFYSMRLNYVRL), 294–328 (SESSFASVIKLCANLKELRFTEQLHCSVVKYGFLF), 329–359 (DQNIRTALMVAYSKCTAMLDALRLFKEIGCV), 361–395 (NVVSWTAMISGFLQNDGKEEAVDLFSEMKRKGVRP), 396–426 (NEFTYSVILTALPVISPSEVHAQVVKTNYER), 427–457 (SSTVGTALLDAYVKLGKVEEAAKVFSGIDDK), 458–492 (DIVAWSAMLAGYAQTGETEAAIKMFGELTKGGIKP), 493–528 (NEFTFSSILNVCAATNASMGQGKQFHGFAIKSRLDS), 529–559 (SLCVSSALLTMYAKKGNIESAEEVFKRQREK), 560–594 (DLVSWNSMISGYAQHGQAMKALDVFKEMKKRKVKM), 595–625 (DGVTFIGVFAACTHAGLVEEGEKYFDIMVRD), and 631–661 (TKEHNSCMVDLYSRAGQLEKAMKVIENMPNP). A type E motif region spans residues 666–741 (IWRTILAACR…EPGYSWIEVK (76 aa)). Residues 742–772 (NKTYSFLAGDRSHPLKDQIYMKLEDLSTRLK) form a type E(+) motif region. Residues 773-868 (DLGYEPDTSY…DGVCSCGDFW (96 aa)) are type DYW motif.

Belongs to the PPR family. PCMP-H subfamily.

This Arabidopsis thaliana (Mouse-ear cress) protein is Pentatricopeptide repeat-containing protein At2g27610 (PCMP-H60).